Reading from the N-terminus, the 149-residue chain is Transcriptional repressor NrdR (149 aa).

The segment at Cys3 to Cys34 is a zinc-finger region. Residues Pro49–Glu139 form the ATP-cone domain.

Belongs to the NrdR family. Zn(2+) is required as a cofactor.

Functionally, negatively regulates transcription of bacterial ribonucleotide reductase nrd genes and operons by binding to NrdR-boxes. This is Transcriptional repressor NrdR from Shewanella sediminis (strain HAW-EB3).